Consider the following 277-residue polypeptide: Inositol monophosphatase 1 (277 aa).

Mg(2+) contacts are provided by E70, D90, I92, and D93. E70 serves as a coordination point for substrate. 92 to 95 (IDGT) contacts substrate. Phosphothreonine is present on T168. Residues 194–196 (GTA), E213, and D220 each bind substrate. Mg(2+) is bound at residue D220.

Belongs to the inositol monophosphatase superfamily. As to quaternary structure, homodimer. Requires Mg(2+) as cofactor.

The protein localises to the cytoplasm. It catalyses the reaction a myo-inositol phosphate + H2O = myo-inositol + phosphate. The catalysed reaction is 1D-myo-inositol 1-phosphate + H2O = myo-inositol + phosphate. The enzyme catalyses 1D-myo-inositol 2-phosphate + H2O = myo-inositol + phosphate. It carries out the reaction 1D-myo-inositol 3-phosphate + H2O = myo-inositol + phosphate. It catalyses the reaction 1D-myo-inositol 4-phosphate + H2O = myo-inositol + phosphate. The catalysed reaction is 1D-myo-inositol 5-phosphate + H2O = myo-inositol + phosphate. The enzyme catalyses 1D-myo-inositol 6-phosphate + H2O = myo-inositol + phosphate. It carries out the reaction scyllo-inositol 1-phosphate + H2O = scyllo-inositol + phosphate. It catalyses the reaction alpha-D-galactose 1-phosphate + H2O = D-galactose + phosphate. The catalysed reaction is alpha-D-glucose 1-phosphate + H2O = D-glucose + phosphate. The enzyme catalyses D-glucose 6-phosphate + H2O = D-glucose + phosphate. It carries out the reaction beta-D-fructose 1-phosphate + H2O = D-fructose + phosphate. It catalyses the reaction glycerol 2-phosphate + H2O = glycerol + phosphate. The catalysed reaction is adenosine 2'-phosphate + H2O = adenosine + phosphate. It functions in the pathway polyol metabolism; myo-inositol biosynthesis; myo-inositol from D-glucose 6-phosphate: step 2/2. With respect to regulation, activity with myo-inositol monophosphates and D-galactose 1-phosphate is inhibited by Li(+), Ca(2+) and Mn(2+), but also by Mg(2+) at concentrations above 3 mM. Its function is as follows. Phosphatase involved in the dephosphorylation of myo-inositol monophosphates to generate myo-inositol. Is also able to dephosphorylate scyllo-inositol-phosphate, myo-inositol 1,4-diphosphate, scyllo-inositol-1,3-diphosphate and scyllo-inositol-1,4-diphosphate. Also dephosphorylates in vitro other sugar-phosphates including D-galactose-1-phosphate, glucose-1-phosphate, glucose-6-phosphate, fructose-1-phosphate, beta-glycerophosphate and 2'-AMP. Responsible for the provision of inositol required for synthesis of phosphatidylinositols and polyphosphoinositides, and involved in maintaining normal brain function. Has been implicated as the pharmacological target for lithium (Li(+)) action in brain, which is used to treat bipolar affective disorder. Is equally active with 1D-myo-inositol 1-phosphate, 1D-myo-inositol 3-phosphate and D-galactose 1-phosphate. The polypeptide is Inositol monophosphatase 1 (Homo sapiens (Human)).